The sequence spans 446 residues: N-succinylarginine dihydrolase (446 aa).

Residues 21–30, asparagine 112, and 139–140 each bind substrate; these read AGLSWGNVAS and HR. Residue glutamate 176 is part of the active site. Position 216 (arginine 216) interacts with substrate. The active site involves histidine 252. 2 residues coordinate substrate: aspartate 254 and asparagine 364. Cysteine 370 (nucleophile) is an active-site residue.

It belongs to the succinylarginine dihydrolase family. Homodimer.

The catalysed reaction is N(2)-succinyl-L-arginine + 2 H2O + 2 H(+) = N(2)-succinyl-L-ornithine + 2 NH4(+) + CO2. It functions in the pathway amino-acid degradation; L-arginine degradation via AST pathway; L-glutamate and succinate from L-arginine: step 2/5. Functionally, catalyzes the hydrolysis of N(2)-succinylarginine into N(2)-succinylornithine, ammonia and CO(2). This is N-succinylarginine dihydrolase from Marinobacter nauticus (strain ATCC 700491 / DSM 11845 / VT8) (Marinobacter aquaeolei).